A 627-amino-acid polypeptide reads, in one-letter code: Muscarinic acetylcholine receptor gar-2 (627 aa).

At 1–9 the chain is on the extracellular side; sequence MAVASVLLA. Residues 10–30 form a helical membrane-spanning segment; that stretch reads LFMLFLSIVTVIGNLAVLLSY. The Cytoplasmic portion of the chain corresponds to 31–41; the sequence is YLDKNIRQPTN. The chain crosses the membrane as a helical span at residues 42–62; sequence YFIFSLAISDLLIGLEGIPVY. The Extracellular portion of the chain corresponds to 63-81; it reads TAFYLNNNEWIWGDVLCDL. Cysteine 79 and cysteine 160 form a disulfide bridge. Residues 82 to 102 traverse the membrane as a helical segment; sequence WLSIDYIVCLASIYTVLGITV. Over 103 to 122 the chain is Cytoplasmic; sequence DRYYSVKKPATYRNWRTPGR. A helical transmembrane segment spans residues 123–143; the sequence is VVLIIIFIWLVPSILFSVSIF. The Extracellular portion of the chain corresponds to 144–172; it reads GYGTFTGTGRILKETECYVQFMTNPYLNM. Residues 173–193 form a helical membrane-spanning segment; that stretch reads GMYISYYWTTLFVMLYLYWGI. Over 194 to 549 the chain is Cytoplasmic; that stretch reads YRAAKKLALK…ENRARKALRT (356 aa). Disordered regions lie at residues 222–266, 423–442, and 449–475; these read VSVR…VGTP, REDE…ENGG, and ANDE…HDPN. Over residues 231 to 264 the composition is skewed to low complexity; that stretch reads NSSSDSPNDTSNSSKCFRTAPPTTTVQTTQTNVG. A compositionally biased stretch (basic and acidic residues) spans 459–475; that stretch reads KESEQKEEMTPENHDPN. A helical transmembrane segment spans residues 550 to 570; that stretch reads ITFILGSFIILWTPFYVLATI. Residues 571 to 586 lie on the Extracellular side of the membrane; the sequence is YGFCETCKASPSFNTL. A helical membrane pass occupies residues 587 to 609; sequence YTISYYLCYMNSPLNPFCYAMAN. Over 610-627 the chain is Cytoplasmic; that stretch reads QQFKKTLTRIFKGDFRRV.

This sequence belongs to the G-protein coupled receptor 1 family. Muscarinic acetylcholine receptor subfamily. As to expression, expressed in putative sensory neurons, many cells of the ventral cord and in the HSN motor neurons. Expressed in some cholinergic motor neurons and GABAergic motor neurons, which are the two major types of ventral cord motor neurons.

The protein resides in the cell membrane. Its subcellular location is the cell projection. It is found in the axon. The muscarinic acetylcholine receptor mediates various cellular responses, including inhibition of adenylate cyclase, breakdown of phosphoinositides and modulation of potassium channels through the action of G proteins. Primary transducing effect is Pi turnover. Regulates the activity of ventral cord motor neurons. Couples to the G(o)-alpha G-protein subunit goa-1 to negatively regulate cholinergic receptor activity in the presence of high levels of the neurotransmitter acetylcholine in ventral cord motor neurons. As acetylcholine depolarizes body wall muscles, modulation of acetylcholine levels most likely results in the control locomotory behavior and egg-laying. This chain is Muscarinic acetylcholine receptor gar-2, found in Caenorhabditis elegans.